The primary structure comprises 1085 residues: DNA-directed RNA polymerase subunit beta (1085 aa).

This sequence belongs to the RNA polymerase beta chain family. In terms of assembly, in plastids the minimal PEP RNA polymerase catalytic core is composed of four subunits: alpha, beta, beta', and beta''. When a (nuclear-encoded) sigma factor is associated with the core the holoenzyme is formed, which can initiate transcription.

It localises to the plastid. It is found in the chloroplast. It catalyses the reaction RNA(n) + a ribonucleoside 5'-triphosphate = RNA(n+1) + diphosphate. Its function is as follows. DNA-dependent RNA polymerase catalyzes the transcription of DNA into RNA using the four ribonucleoside triphosphates as substrates. This Physcomitrium patens (Spreading-leaved earth moss) protein is DNA-directed RNA polymerase subunit beta.